The chain runs to 413 residues: Serine/threonine transporter SstT (413 aa).

Helical transmembrane passes span isoleucine 19–valine 39, alanine 61–glycine 81, isoleucine 89–phenylalanine 109, alanine 148–leucine 168, isoleucine 189–leucine 209, leucine 223–valine 243, isoleucine 297–leucine 317, and isoleucine 325–glycine 345.

This sequence belongs to the dicarboxylate/amino acid:cation symporter (DAACS) (TC 2.A.23) family.

Its subcellular location is the cell inner membrane. It catalyses the reaction L-serine(in) + Na(+)(in) = L-serine(out) + Na(+)(out). It carries out the reaction L-threonine(in) + Na(+)(in) = L-threonine(out) + Na(+)(out). In terms of biological role, involved in the import of serine and threonine into the cell, with the concomitant import of sodium (symport system). The polypeptide is Serine/threonine transporter SstT (Pasteurella multocida (strain Pm70)).